The following is a 168-amino-acid chain: MVDMQSLDEEDFSVSKSSDADAEFDIVIGNIEDIIMEDEFQHLQQSFMEKYYLEFDDSEENKLSYTPIFNEYIEILEKHLEQQLVERIPGFNMDAFTHSLKQHKDEVSGDILDMLLTFTDFMAFKEMFTDYRAEKEGRGLDLSTGLVVKSLNSSSASPLTPSMASQSI.

The protein belongs to the ARL2BP family.

The protein localises to the cytoplasm. Its subcellular location is the mitochondrion intermembrane space. The protein resides in the cytoskeleton. It is found in the microtubule organizing center. It localises to the centrosome. The protein localises to the nucleus. Its subcellular location is the spindle. The protein resides in the cilium basal body. Functionally, plays a role as an effector of the ADP-ribosylation factor-like protein 2, ARL2. This is ADP-ribosylation factor-like protein 2-binding protein (arl2bp) from Danio rerio (Zebrafish).